A 479-amino-acid chain; its full sequence is Ribulose bisphosphate carboxylase large chain (479 aa).

The propeptide occupies 1 to 2 (MS). Positions 123 and 173 each coordinate substrate. Lys175 functions as the Proton acceptor in the catalytic mechanism. Substrate is bound at residue Lys177. Mg(2+)-binding residues include Lys201, Asp203, and Glu204. Lys201 carries the post-translational modification N6-carboxylysine. Position 208 is a phosphoserine (Ser208). The Proton acceptor role is filled by His294. Substrate contacts are provided by Arg295 and His327. Thr330 carries the phosphothreonine modification. Residue Ser379 coordinates substrate.

This sequence belongs to the RuBisCO large chain family. Type I subfamily. Heterohexadecamer of 8 large chains and 8 small chains; disulfide-linked. The disulfide link is formed within the large subunit homodimers. The cofactor is Mg(2+). In terms of processing, the disulfide bond which can form in the large chain dimeric partners within the hexadecamer appears to be associated with oxidative stress and protein turnover.

The protein localises to the plastid. The protein resides in the chloroplast. The catalysed reaction is 2 (2R)-3-phosphoglycerate + 2 H(+) = D-ribulose 1,5-bisphosphate + CO2 + H2O. It catalyses the reaction D-ribulose 1,5-bisphosphate + O2 = 2-phosphoglycolate + (2R)-3-phosphoglycerate + 2 H(+). Its function is as follows. RuBisCO catalyzes two reactions: the carboxylation of D-ribulose 1,5-bisphosphate, the primary event in carbon dioxide fixation, as well as the oxidative fragmentation of the pentose substrate in the photorespiration process. Both reactions occur simultaneously and in competition at the same active site. This chain is Ribulose bisphosphate carboxylase large chain, found in Brassica oleracea (Wild cabbage).